A 1797-amino-acid polypeptide reads, in one-letter code: MDSALQRVIFFGNEFPSDDLKDLFRRLYQHSKDRRFRLLSAFLEESTTVLKDEIAKLPWPLKELVPPFNSVLDLADVDFRQGPLGAAMESSMLTILELGMFIGHYQAEDVEWDLIPERTLLAGLSIGILAAAAVALSSSLADVSKNGAEAVRVSFRLGIYVADISSKLETPQSDGTLKSWAHVVTEMTQASVQDELNQFNTDTHSPELTKVFISAADKTSVSVSGPPSRVKAAFQHSPILRYSKSLPLPVYDGLCHASHLYTRSDIDAIINCAESVIKPDRSVRLALLSSQTGKPFVAKAASELFLEIGTELLTGTIYLDNVTAGIIEHFKLQSEAATKCRIDSFRTSLVLRGIHSAVEAHFAEEQQQFIRCDLVCWVHKDFGPRQPRSHASSKLAIVGMACRLPGGANDLDLFWKLLEDGRDTLTTVPVDRFDLNTHYDPTGKTENATQTPYGNFIDRPGYFDAGFFNMSPREAEQTDPMQRLALVTAYEAMEMAGVVPGRTPSTHPSRIGTFYGQASDDWRELNASQNISTYAVPGGERAFANGRINYFFKFSGPSFNLDTACSSGLAAVQAACSALWAGEIDTAIAGGLNVITDPDNYCGLGNAHFLSKTGQCKVWDKDADGYCRADGIGSVVIKRLEDAEADNDNILAVVLGACTNHSAEAISITHPHAGAQKANYRQVLHQAGVNPIDVSYIELHGTGTQAGDAVESESVSDIFAPVTPRRRPDQRLHLGAVKSNIGHGEAAAGIASLLKALLVYQKNMIPMHIGIKSEINPTIPKDLERRNVGLAMQNTPWPRVEGKKRLAVVNSFGAHGGNTTLLLEDAPEMVKAQNPEDRITHSVLLSAKSKKSLQANMESLLSYLDQHPETNLADLAYTTSSRRMHHNMRFGTAVSCIPALQKALRSQLDNTNFASEVRPIPNEAPSVVLAFTGQGAYYSGMGRELFSEFPYFRSQVQQLDQLAQRLGFPSVVPVIDGSIEDSSKSTILTQLSVVILEIALARFWSLLGVSISAVIGHSLGEYAALAVAGVISAADAIYLVGRRARLVEERCTLGSHSMLSVRASEDAIQQMLASGPDTAAIEYEVSCCNTNQDTVIGGLKDEINDIRKALEAKSIKCTLLDVPYAFHTAQMDPILDDLEAFAAHVPFNAPSIPVLSPLLATAIFDVKSLNANYLRRAARETVDFAAAIEAAQDMGLVDSKTVWIDVGPHPICAGLVRGMIPSVSVVSSCRRNEDSIATICKSLVTLHLAGLTPCWAEFFKPRECEYSLLHLPKYRWNETNYWIPYIGTWTLDKAHLKHGTKPMTPFSLSMSRPSALRTSLIHQITAETIESTTATLHTISDMQHPDFLEAIQGHTMNKCGVATSSIWSDMAFTVGEYLYRLLMPNVKDVHMNLTDVEVLHAQVASKTRGSIQPLVLQAHLDLSTNSMCLSWFNADGETGECAAESFATATVRFEDPAAWKKEWARLAHLVRGRIEALEQRAVEGKASRLSKPLAYALFKNVVDYADRYRGMDSVVLDELEAMAEVTLVPERHGTWHTPPHWIDSVSHLAGLVMNGSDASNTRDYFFVTPGCDSFRLLNKLEPGAQYRSYVRMFPLLEDPNMHGGDVYILQGEEIVGMVGMIRFRRVPRLLMDRFFSPPTTTSVVGPAPPVVSAATKTHGITQSVPEISAPSPSIVVSDSTANNTLTDKLPVPVPRLASSSESSTPKESPIATPPESESAEPLGNTVSQCLRLMARETGLEVEALTGDASFVQLGVDSLMSLVLSEKFRAELGVEIKSSLFLECPTIGEMTAWIEEYC.

The N-terminal acylcarrier protein transacylase domain (SAT) stretch occupies residues 17 to 256; that stretch reads SDDLKDLFRR…PLPVYDGLCH (240 aa). Positions 392–825 constitute a Ketosynthase family 3 (KS3) domain; it reads SSKLAIVGMA…GGNTTLLLED (434 aa). Catalysis depends on for beta-ketoacyl synthase activity residues cysteine 565, histidine 700, and histidine 743. Positions 931-1251 are malonyl-CoA:ACP transacylase (MAT) domain; sequence FTGQGAYYSG…SLVTLHLAGL (321 aa). The tract at residues 1318–1637 is product template (PT) domain; the sequence is TSLIHQITAE…RLLMDRFFSP (320 aa). Positions 1322 to 1458 are N-terminal hotdog fold; it reads HQITAETIES…ATVRFEDPAA (137 aa). Residues 1322–1632 enclose the PKS/mFAS DH domain; that stretch reads HQITAETIES…FRRVPRLLMD (311 aa). Histidine 1354 (proton acceptor; for dehydratase activity) is an active-site residue. A C-terminal hotdog fold region spans residues 1482–1632; the sequence is VEGKASRLSK…FRRVPRLLMD (151 aa). Aspartate 1543 functions as the Proton donor; for dehydratase activity in the catalytic mechanism. Residues 1663 to 1686 show a composition bias toward polar residues; that stretch reads SVPEISAPSPSIVVSDSTANNTLT. The tract at residues 1663 to 1723 is disordered; sequence SVPEISAPSP…PESESAEPLG (61 aa). Residues 1698–1709 are compositionally biased toward low complexity; the sequence is SSSESSTPKESP. Positions 1720–1797 constitute a Carrier domain; sequence EPLGNTVSQC…EMTAWIEEYC (78 aa). An O-(pantetheine 4'-phosphoryl)serine modification is found at serine 1757.

Requires pantetheine 4'-phosphate as cofactor.

It functions in the pathway secondary metabolite biosynthesis. In terms of biological role, non-reducing polyketide synthase; part of the gene cluster that mediates the biosynthesis of neosartoricin B, a prenylated anthracenone that probably exhibits T-cell antiproliferative activity, suggestive of a physiological role as an immunosuppressive agent. The non-reducing polyketide synthase nscA probably synthesizes and cyclizes the decaketide backbone. The hydrolase nscB then mediates the product release through hydrolysis followed by spontaneous decarboxylation. The prenyltransferase nscD catalyzes the addition of the dimethylallyl group to the aromatic C5. The FAD-dependent monooxygenase nscC is then responsible for the stereospecific hydroxylation at C2. Neosartoricin B can be converted into two additional compounds neosartoricins C and D. Neosartoricin C is a spirocyclic compound that is cyclized through the attack of C3 hydroxyl on C14, followed by dehydration. On the other hand, neosartoricin D is a further cyclized compound in which attack of C2 on C14 in neosartoricin C results in the formation of the acetal-containing dioxabicyclo-octanone ring. Both of these compounds are novel and possibly represent related metabolites of the gene cluster. The protein is Non-reducing polyketide synthase nscA of Arthroderma gypseum (strain ATCC MYA-4604 / CBS 118893) (Microsporum gypseum).